Here is a 396-residue protein sequence, read N- to C-terminus: Elongation factor Tu (396 aa).

One can recognise a tr-type G domain in the interval 10 to 205 (KPHVNIGTIG…AVDESIPDPV (196 aa)). The segment at 19–26 (GHVDHGKT) is G1. GTP is bound at residue 19–26 (GHVDHGKT). Threonine 26 is a Mg(2+) binding site. The tract at residues 62–66 (GITIN) is G2. Positions 83–86 (DAPG) are G3. GTP-binding positions include 83 to 87 (DAPGH) and 138 to 141 (NKAD). Positions 138–141 (NKAD) are G4. The G5 stretch occupies residues 175–177 (SAL).

Belongs to the TRAFAC class translation factor GTPase superfamily. Classic translation factor GTPase family. EF-Tu/EF-1A subfamily. As to quaternary structure, monomer.

The protein resides in the cytoplasm. It carries out the reaction GTP + H2O = GDP + phosphate + H(+). GTP hydrolase that promotes the GTP-dependent binding of aminoacyl-tRNA to the A-site of ribosomes during protein biosynthesis. This Mycolicibacterium vanbaalenii (strain DSM 7251 / JCM 13017 / BCRC 16820 / KCTC 9966 / NRRL B-24157 / PYR-1) (Mycobacterium vanbaalenii) protein is Elongation factor Tu.